The chain runs to 59 residues: Amyloid-beta precursor protein (59 aa).

The Extracellular segment spans residues 1-34; sequence ISEVKMDAEFRHDSGYEVHHQKLVFFAEDVGSNK. The helical transmembrane segment at 35 to 58 threads the bilayer; the sequence is GAIIGLMVGGVVIATVIVITLVML. Lysine 59 is a topological domain (cytoplasmic).

It belongs to the APP family. In terms of assembly, binds, via its C-terminus, to the PID domain of several cytoplasmic proteins, including APBB family members, the APBA family, MAPK8IP1, SHC1 and NUMB and DAB1. Binding to DAB1 inhibits its serine phosphorylation. Interacts (via NPXY motif) with DAB2 (via PID domain); the interaction is impaired by tyrosine phosphorylation of the NPXY motif. Also interacts with GPCR-like protein BPP, APPBP1, IB1, KNS2 (via its TPR domains), APPBP2 (via BaSS) and DDB1. In vitro, it binds MAPT via the MT-binding domains. Associates with microtubules in the presence of ATP and in a kinesin-dependent manner. Interacts, through a C-terminal domain, with GNAO1. Interacts with CPEB1, ANKS1B and AGER. Interacts with ITM2B. Interacts with ITM2C. Interacts with IDE. Can form homodimers; dimerization is enhanced in the presence of Cu(2+) ions. Can form homodimers; this is promoted by heparin binding. Interacts with SORL1 (via N-terminal ectodomain); this interaction retains APP in the trans-Golgi network and reduces processing into soluble APP-alpha and amyloid-beta peptides. Interacts with PLD3. Interacts with VDAC1. Interacts with NSG1; could regulate APP processing. Amyloid-beta protein 42 interacts with FPR2. Interacts with LRRK2. Interacts (via cytoplasmic domain) with KIF5B. Interacts (via C-terminus) with APBB2/FE65L1 (via C-terminus). Interacts (via intracellular domain) with APBB3. Proteolytically processed under normal cellular conditions. Cleavage either by alpha-secretase, beta-secretase or theta-secretase leads to generation and extracellular release of soluble APP peptides, S-APP-alpha and S-APP-beta, and the retention of corresponding membrane-anchored C-terminal fragments, C80, C83 and C99. Subsequent processing of C80 and C83 by gamma-secretase yields P3 peptides. This is the major secretory pathway and is non-amyloidogenic. Alternatively, presenilin/nicastrin-mediated gamma-secretase processing of C99 releases the amyloid-beta proteins, amyloid-beta protein 40 and amyloid-beta protein 42, major components of amyloid plaques, and the cytotoxic C-terminal fragments, gamma-CTF(50), gamma-CTF(57) and gamma-CTF(59). PSEN1 cleavage is more efficient with C83 than with C99 as substrate (in vitro). Amyloid-beta protein 40 and Amyloid-beta protein 42 are cleaved by ACE. Many other minor amyloid-beta peptides, amyloid-beta 1-X peptides, are found in cerebral spinal fluid (CSF) including the amyloid-beta X-15 peptides, produced from the cleavage by alpha-secretase.

The protein localises to the cell membrane. It localises to the membrane. It is found in the perikaryon. The protein resides in the cell projection. Its subcellular location is the growth cone. The protein localises to the clathrin-coated pit. It localises to the early endosome. It is found in the cytoplasmic vesicle. The protein resides in the secreted. Its subcellular location is the cell surface. The protein localises to the nucleus. It localises to the cytoplasm. Its function is as follows. Functions as a cell surface receptor and performs physiological functions on the surface of neurons relevant to neurite growth, neuronal adhesion and axonogenesis. Interaction between APP molecules on neighboring cells promotes synaptogenesis. Involved in cell mobility and transcription regulation through protein-protein interactions. Can promote transcription activation through binding to APBB1-KAT5 and inhibit Notch signaling through interaction with Numb. Couples to apoptosis-inducing pathways such as those mediated by G(o) and JIP. Inhibits G(o)-alpha ATPase activity. Acts as a kinesin I membrane receptor, mediating the axonal transport of beta-secretase and presenilin 1. By acting as a kinesin I membrane receptor, plays a role in axonal anterograde transport of cargo towards synapses in axons. May be involved in copper homeostasis/oxidative stress through copper ion reduction. In vitro, copper-metallated APP induces neuronal death directly or is potentiated through Cu(2+)-mediated low-density lipoprotein oxidation. Can regulate neurite outgrowth through binding to components of the extracellular matrix such as heparin and collagen I and IV. Induces a AGER-dependent pathway that involves activation of p38 MAPK, resulting in internalization of amyloid-beta peptide and mitochondrial dysfunction in cultured cortical neurons. Provides Cu(2+) ions for GPC1 which are required for release of nitric oxide (NO) and subsequent degradation of the heparan sulfate chains on GPC1. The polypeptide is Amyloid-beta precursor protein (APP) (Bos taurus (Bovine)).